The following is a 668-amino-acid chain: Alpha-1,4-glucan:maltose-1-phosphate maltosyltransferase (668 aa).

Residues 263-288 are disordered; that stretch reads RKGRNNSLTPAPDDPGSPYAIGSEEG. The alpha-maltose 1-phosphate site is built by Lys-264, Gln-324, and Asp-359. The active-site Nucleophile is the Asp-395. Asn-396 contributes to the alpha-maltose 1-phosphate binding site. The active-site Proton donor is the Glu-424. An alpha-maltose 1-phosphate-binding site is contributed by 535-536; it reads KY.

It belongs to the glycosyl hydrolase 13 family. GlgE subfamily. As to quaternary structure, homodimer.

The enzyme catalyses alpha-maltose 1-phosphate + [(1-&gt;4)-alpha-D-glucosyl](n) = [(1-&gt;4)-alpha-D-glucosyl](n+2) + phosphate. Functionally, maltosyltransferase that uses maltose 1-phosphate (M1P) as the sugar donor to elongate linear or branched alpha-(1-&gt;4)-glucans. Is involved in a branched alpha-glucan biosynthetic pathway from trehalose, together with TreS, Mak and GlgB. This Cereibacter sphaeroides (strain ATCC 17023 / DSM 158 / JCM 6121 / CCUG 31486 / LMG 2827 / NBRC 12203 / NCIMB 8253 / ATH 2.4.1.) (Rhodobacter sphaeroides) protein is Alpha-1,4-glucan:maltose-1-phosphate maltosyltransferase.